We begin with the raw amino-acid sequence, 515 residues long: 2-isopropylmalate synthase (515 aa).

Positions 4-266 constitute a Pyruvate carboxyltransferase domain; it reads IKFFDTTLRD…ETRLNLQEIK (263 aa). 4 residues coordinate Mn(2+): Asp-13, His-201, His-203, and Asn-237. The tract at residues 391–515 is regulatory domain; that stretch reads QLSSIQVQYG…RAENEKVTTP (125 aa).

The protein belongs to the alpha-IPM synthase/homocitrate synthase family. LeuA type 1 subfamily. As to quaternary structure, homodimer. It depends on Mn(2+) as a cofactor.

It localises to the cytoplasm. It carries out the reaction 3-methyl-2-oxobutanoate + acetyl-CoA + H2O = (2S)-2-isopropylmalate + CoA + H(+). It functions in the pathway amino-acid biosynthesis; L-leucine biosynthesis; L-leucine from 3-methyl-2-oxobutanoate: step 1/4. In terms of biological role, catalyzes the condensation of the acetyl group of acetyl-CoA with 3-methyl-2-oxobutanoate (2-ketoisovalerate) to form 3-carboxy-3-hydroxy-4-methylpentanoate (2-isopropylmalate). The chain is 2-isopropylmalate synthase from Geobacillus thermodenitrificans (strain NG80-2).